The sequence spans 120 residues: uncharacterized protein (120 aa).

Positions 1–19 (MKKIVCAVVALLLTLPAWA) are cleaved as a signal peptide.

This is an uncharacterized protein from Salmonella typhimurium (strain LT2 / SGSC1412 / ATCC 700720).